We begin with the raw amino-acid sequence, 336 residues long: Antigen-presenting glycoprotein CD1d1 (336 aa).

Positions 1 to 21 are cleaved as a signal peptide; sequence MRYLPWLLLWAFLQVWGQSEA. Residues 22–305 are Extracellular-facing; that stretch reads QQKNYTFRCL…YWDARQAPVG (284 aa). Asparagine 25, asparagine 38, and asparagine 60 each carry an N-linked (GlcNAc...) asparagine glycan. Residue aspartate 98 participates in a D-galactosylceramide binding. Intrachain disulfides connect cysteine 122–cysteine 186 and cysteine 226–cysteine 281. A glycan (N-linked (GlcNAc...) asparagine) is linked at asparagine 128. A D-galactosylceramide is bound at residue 171–174; the sequence is DQGT. N-linked (GlcNAc...) asparagine glycosylation is present at asparagine 183. An Ig-like domain is found at 207 to 297; it reads PVAWLSSVPS…LGGQDIILYW (91 aa). A helical transmembrane segment spans residues 306–326; sequence LIVFIVLIMLVVVGAVVYYIW. The Cytoplasmic segment spans residues 327–336; it reads RRRSAYQDIR. Residues 332–335 carry the Internalization signal motif; the sequence is YQDI.

Heterodimer with B2M (beta-2-microglobulin). Interacts with MHC II and CD74. Post-translationally, N-glycosylated. As to expression, expressed on cortical thymocytes, on certain T-cell leukemias, and in various other tissues.

The protein resides in the cell membrane. It localises to the endosome membrane. The protein localises to the lysosome membrane. Its function is as follows. Antigen-presenting protein that binds self and non-self glycolipids and presents them to T-cell receptors on natural killer T-cells. The chain is Antigen-presenting glycoprotein CD1d1 (Cd1d1) from Mus musculus (Mouse).